The following is a 1203-amino-acid chain: DNA-directed RNA polymerase subunit beta' (1203 aa).

Cys60, Cys62, Cys75, and Cys78 together coordinate Zn(2+). 3 residues coordinate Mg(2+): Asp449, Asp451, and Asp453. Residues Cys818, Cys892, Cys899, and Cys902 each contribute to the Zn(2+) site. A disordered region spans residues 1180–1203 (RNLESGLDMPESAEESSEEETQTV). Residues 1190 to 1203 (ESAEESSEEETQTV) show a composition bias toward acidic residues.

Belongs to the RNA polymerase beta' chain family. In terms of assembly, the RNAP catalytic core consists of 2 alpha, 1 beta, 1 beta' and 1 omega subunit. When a sigma factor is associated with the core the holoenzyme is formed, which can initiate transcription. The cofactor is Mg(2+). Zn(2+) is required as a cofactor.

It carries out the reaction RNA(n) + a ribonucleoside 5'-triphosphate = RNA(n+1) + diphosphate. Functionally, DNA-dependent RNA polymerase catalyzes the transcription of DNA into RNA using the four ribonucleoside triphosphates as substrates. This Oceanobacillus iheyensis (strain DSM 14371 / CIP 107618 / JCM 11309 / KCTC 3954 / HTE831) protein is DNA-directed RNA polymerase subunit beta'.